The following is a 331-amino-acid chain: Rho GTPase-activating protein 5 (331 aa).

The CRIB domain occupies 3-16 (IGGPTNIRHVAHVT). In terms of domain architecture, Rho-GAP spans 48-225 (VSTESMQLSY…LLKSLTEKTV (178 aa)). A compositionally biased stretch (basic and acidic residues) spans 227 to 251 (EREASSSVVDRRCSKEAEDGEKEKD). Residues 227 to 331 (EREASSSVVD…VQPPICSSNP (105 aa)) form a disordered region. A compositionally biased stretch (acidic residues) spans 252 to 277 (NEEEEEDEEEEEEEEDEDEDEEEEGD).

As to expression, expressed in differentiating xylem cells.

Its subcellular location is the cell membrane. Its function is as follows. Acts as a GTPase activator for the Rac-type GTPase by converting it to an inactive GDP-bound state. This Arabidopsis thaliana (Mouse-ear cress) protein is Rho GTPase-activating protein 5 (ROPGAP5).